Reading from the N-terminus, the 240-residue chain is Transcriptional regulatory protein BaeR (240 aa).

The Response regulatory domain maps to 12-125 (RILIVEDEPK…EVVARVKTIL (114 aa)). A 4-aspartylphosphate modification is found at aspartate 61. Positions 131–234 (QRELQQQDAE…VYGVGYRWEA (104 aa)) form a DNA-binding region, ompR/PhoB-type.

Post-translationally, phosphorylated by BaeS.

The protein localises to the cytoplasm. Member of the two-component regulatory system BaeS/BaeR. Activates the mdtABCD operon. This chain is Transcriptional regulatory protein BaeR (baeR), found in Escherichia coli O6:H1 (strain CFT073 / ATCC 700928 / UPEC).